A 303-amino-acid chain; its full sequence is Probable serine acetyltransferase 1 (303 aa).

Disordered stretches follow at residues 1–36 and 271–290; these read MTAGQPLRDDPQPRRHSPPALHPAVVPAYPPPESDA and NPARLLGGKKGDDMPGESMD.

It belongs to the transferase hexapeptide repeat family. In terms of assembly, homomultimer.

The enzyme catalyses L-serine + acetyl-CoA = O-acetyl-L-serine + CoA. The protein operates within amino-acid biosynthesis; L-cysteine biosynthesis; L-cysteine from L-serine: step 1/2. The sequence is that of Probable serine acetyltransferase 1 (SAT1) from Oryza sativa subsp. japonica (Rice).